Consider the following 172-residue polypeptide: Inorganic pyrophosphatase (172 aa).

Substrate contacts are provided by Lys-29, Arg-43, and Tyr-55. The Mg(2+) site is built by Asp-65, Asp-70, and Asp-102. Tyr-141 is a substrate binding site.

It belongs to the PPase family. In terms of assembly, homohexamer. Mg(2+) is required as a cofactor.

It localises to the cytoplasm. The enzyme catalyses diphosphate + H2O = 2 phosphate + H(+). In terms of biological role, catalyzes the hydrolysis of inorganic pyrophosphate (PPi) forming two phosphate ions. The chain is Inorganic pyrophosphatase from Rickettsia prowazekii (strain Madrid E).